A 417-amino-acid polypeptide reads, in one-letter code: Pre-mRNA-splicing factor PRP46 (417 aa).

WD repeat units follow at residues 119-159 (AHQG…LKAT), 162-201 (GHIM…SSSG), 209-248 (GHVG…EIMV), 251-290 (GHRS…TQLA), 293-334 (HHSK…NEFG), 337-376 (GENK…LLQS), and 385-417 (STES…WGEE).

This sequence belongs to the WD repeat PRL1/PRL2 family. As to quaternary structure, associated with the spliceosome.

It is found in the cytoplasm. Its subcellular location is the nucleus. Functionally, involved in pre-mRNA splicing and required for cell cycle progression at G2/M. The sequence is that of Pre-mRNA-splicing factor PRP46 (PRP46) from Debaryomyces hansenii (strain ATCC 36239 / CBS 767 / BCRC 21394 / JCM 1990 / NBRC 0083 / IGC 2968) (Yeast).